A 266-amino-acid chain; its full sequence is Endoplasmic reticulum vesicle protein 25 (266 aa).

The signal sequence occupies residues 1–26 (MGSSPQSSTRTLLGLLFLLLVQLSSA). Over 27-188 (LKFDLHASSG…TNESTNERVK (162 aa)) the chain is Lumenal. The region spanning 39-129 (ERCIRNFVFK…YKSVELDVEI (91 aa)) is the GOLD domain. A helical transmembrane segment spans residues 189–209 (WFAFGTMGMLVGLGVWQVVYL). The Cytoplasmic portion of the chain corresponds to 210-266 (RAYFRYVDFPVSWRVDGVVANCCSCCEQVEASYLRSSRVVFWSPLVMWTRLSWLILR).

This sequence belongs to the EMP24/GP25L family.

It localises to the endoplasmic reticulum membrane. The protein localises to the golgi apparatus membrane. Functionally, constituent of COPII-coated endoplasmic reticulum-derived transport vesicles. Required for efficient transport of a subset of secretory proteins to the Golgi. Facilitates retrograde transport from the Golgi to the endoplasmic reticulum. This Aspergillus fumigatus (strain ATCC MYA-4609 / CBS 101355 / FGSC A1100 / Af293) (Neosartorya fumigata) protein is Endoplasmic reticulum vesicle protein 25 (erv25).